Here is a 31-residue protein sequence, read N- to C-terminus: Monocyclic monoterpene ketone monooxygenase (31 aa).

20-25 is a binding site for FAD; it reads GAGFXG.

As to quaternary structure, monomer. Requires FAD as cofactor.

It carries out the reaction 1-hydroxylimonen-2-one + NADPH + O2 = 3-isopropenyl-6-oxoheptanoate + NADP(+) + H2O. The catalysed reaction is (1R,4S)-1-hydroxylimonen-2-one + NADPH + O2 + H(+) = (4S,7S)-7-hydroxy-4-isopropenyl-7-methyloxepan-2-one + NADP(+) + H2O. It catalyses the reaction (1S,4R)-1-hydroxylimonen-2-one + NADPH + O2 + H(+) = (4R,7R)-7-hydroxy-4-isopropenyl-7-methyloxepan-2-one + NADP(+) + H2O. The enzyme catalyses (1R,4R)-dihydrocarvone + NADPH + O2 + H(+) = (4R,7R)-4-isopropenyl-7-methyloxepan-2-one + NADP(+) + H2O. It carries out the reaction (1S,4R)-menthone + NADPH + O2 + H(+) = (4S,7R)-7-isopropyl-4-methyloxepan-2-one + NADP(+) + H2O. The catalysed reaction is (1R,4S)-menthone + NADPH + O2 + H(+) = (4R,7S)-7-isopropyl-4-methyloxepan-2-one + NADP(+) + H2O. It catalyses the reaction (1S,4R)-isodihydrocarvone + NADPH + O2 + H(+) = (3S,6R)-6-isopropenyl-3-methyloxepan-2-one + NADP(+) + H2O. It functions in the pathway terpene metabolism; monoterpene degradation. Functionally, catalyzes the NADPH- and oxygen-dependent oxidation of the monocyclic monoterpene ketones 1-hydroxy-2-oxolimonene, dihydrocarvone and menthone. Is able to convert all enantiomers of these natural substrates with almost equal efficiency. Is thus involved in the conversion of the monocyclic monoterpene ketone intermediates formed in the degradation pathways of all stereoisomers of three different monocyclic monoterpenes, i.e. limonene, (dihydro)carveol and menthol, which likely make R.erythropolis able to grow on these compounds as the sole source of carbon and energy. The polypeptide is Monocyclic monoterpene ketone monooxygenase (Rhodococcus erythropolis (Arthrobacter picolinophilus)).